The chain runs to 178 residues: FXYD domain-containing ion transport regulator 5 (178 aa).

Residues 1–21 (MSPPSQLCLLTIVALILPSEG) form the signal peptide. The interval 21-126 (GQTPEKPRSS…YMPPSYIENP (106 aa)) is disordered. Residues 22–146 (QTPEKPRSSF…YDNTTLRKRG (125 aa)) lie on the Extracellular side of the membrane. A compositionally biased stretch (polar residues) spans 29–58 (SSFTAHQSSVTTHVPVPDQTSPGVQTTPPI). Residues 70-79 (QTAAKTKTQQ) show a composition bias toward low complexity. Residues 147 to 164 (LLVAAVLFITGIIILTSG) form a helical membrane-spanning segment. Over 165–178 (KCRQFSQLCLNRHR) the chain is Cytoplasmic.

The protein belongs to the FXYD family. As to quaternary structure, regulatory subunit of the sodium/potassium-transporting ATPase which is composed of a catalytic alpha subunit, a non-catalytic beta subunit and an additional regulatory subunit. The regulatory subunit, a member of the FXYD protein family, modulates the enzymatic activity in a tissue- and isoform-specific way by changing affinities of the Na+/K+-ATPase toward Na(+), K(+) or ATP. Post-translationally, glycosylated. Spleen, lung, skeletal muscle, and testis.

The protein localises to the cell membrane. It localises to the basolateral cell membrane. In terms of biological role, associates with and regulates the activity of the sodium/potassium-transporting ATPase (NKA) which catalyzes the hydrolysis of ATP coupled with the exchange of Na(+) and K(+) ions across the plasma membrane. May increase NKA activity by increasing the apparent affinity for Na(+). Involved in down-regulation of E-cadherin which results in reduced cell adhesion. Promotes metastasis. This chain is FXYD domain-containing ion transport regulator 5 (Fxyd5), found in Rattus norvegicus (Rat).